A 137-amino-acid chain; its full sequence is Type 3 secretion system pilotin (137 aa).

A signal peptide spans 1–14; the sequence is MLLPLALLLGGCVS.

It belongs to the ExsB/YscW family.

It localises to the cell outer membrane. Its function is as follows. Involved in the synthesis of the type III secretion system (T3SS), also called injectisome, which is used to inject bacterial effector proteins into eukaryotic host cells. Pilot protein that is required for the proper localization of the secretin PscC in the outer membrane. Necessary for full in vivo virulence. This Pseudomonas aeruginosa (strain ATCC 15692 / DSM 22644 / CIP 104116 / JCM 14847 / LMG 12228 / 1C / PRS 101 / PAO1) protein is Type 3 secretion system pilotin.